The following is a 215-amino-acid chain: uncharacterized protein (215 aa).

This is an uncharacterized protein from Acanthamoeba polyphaga mimivirus (APMV).